Consider the following 140-residue polypeptide: MKKIVATGTFDILHPGHIYYLEESKKLGDELWVIVAREKNVVHKPRPIVSEDQRLKMIQSLKCVDHAVLGDQTDMYKPIREIDPAVITIGFNQKWSEEKLRADLAERNICADVVRISEYTGMPFTSSTKIIDEAVRRRTK.

ATP is bound by residues 9–10, 14–17, Asn92, and Tyr119; these read TF and HPGH.

Belongs to the archaeal FAD synthase family. As to quaternary structure, homodimer. Requires a divalent metal cation as cofactor.

It carries out the reaction FMN + ATP + H(+) = FAD + diphosphate. Its pathway is cofactor biosynthesis; FAD biosynthesis; FAD from FMN: step 1/1. Catalyzes the transfer of the AMP portion of ATP to flavin mononucleotide (FMN) to produce flavin adenine dinucleotide (FAD) coenzyme. The protein is FAD synthase of Methanocorpusculum labreanum (strain ATCC 43576 / DSM 4855 / Z).